The primary structure comprises 250 residues: Ribosomal RNA small subunit methyltransferase J (250 aa).

Residues 96-97 and aspartate 168 each bind S-adenosyl-L-methionine; that span reads RD.

It belongs to the methyltransferase superfamily. RsmJ family.

It is found in the cytoplasm. The enzyme catalyses guanosine(1516) in 16S rRNA + S-adenosyl-L-methionine = N(2)-methylguanosine(1516) in 16S rRNA + S-adenosyl-L-homocysteine + H(+). Its function is as follows. Specifically methylates the guanosine in position 1516 of 16S rRNA. The sequence is that of Ribosomal RNA small subunit methyltransferase J from Neisseria meningitidis serogroup C (strain 053442).